A 115-amino-acid polypeptide reads, in one-letter code: Large ribosomal subunit protein bL20c (115 aa).

The protein belongs to the bacterial ribosomal protein bL20 family.

The protein resides in the plastid. Its subcellular location is the chloroplast. Binds directly to 23S ribosomal RNA and is necessary for the in vitro assembly process of the 50S ribosomal subunit. It is not involved in the protein synthesizing functions of that subunit. This is Large ribosomal subunit protein bL20c (rpl20) from Cyanidium caldarium (Red alga).